Here is a 167-residue protein sequence, read N- to C-terminus: Transmembrane protein 229B (167 aa).

Residues 1–14 (MASAEPLTALSRWY) lie on the Cytoplasmic side of the membrane. Residues 15-35 (LYAIHGYFCEVMFTAAWEFVV) form a helical membrane-spanning segment. Over 36–40 (NFNWK) the chain is Extracellular. A helical membrane pass occupies residues 41 to 61 (FPGVTSVWALFIYGTSILIVE). The Cytoplasmic segment spans residues 62 to 73 (RMYLRLRGRCPL). Residues 74-94 (LVRCVIYTLWTYLWEFTTGFI) traverse the membrane as a helical segment. At 95-109 (LRQFNACPWDYSQFD) the chain is on the extracellular side. The chain crosses the membrane as a helical span at residues 110–130 (FDFMGLITLEYAVPWFCGALI). Over 131–167 (MEQFIIRNTLRLRFDKDAEPGEPASPPALANGHVKTD) the chain is Cytoplasmic. The disordered stretch occupies residues 148 to 167 (AEPGEPASPPALANGHVKTD).

Belongs to the TMEM229 family.

It is found in the membrane. This chain is Transmembrane protein 229B (TMEM229B), found in Mus musculus (Mouse).